Reading from the N-terminus, the 559-residue chain is ATP-dependent RNA helicase HAS1 (559 aa).

The interval 1–90 (MAPRSQSKSQ…TSEAEADEPG (90 aa)) is disordered. 2 stretches are compositionally biased toward basic and acidic residues: residues 9–22 (SQRE…REDA) and 55–75 (PDQK…ELTK). Residues 93–121 (YSFEKADFSEPTMKAIKEMGFQKMTKVQA) carry the Q motif motif. Residues 124–300 (IPPLLAGRDV…RISLRPGPLY (177 aa)) enclose the Helicase ATP-binding domain. Position 137–144 (137–144 (AKTGSGKT)) interacts with ATP. A DEAD box motif is present at residues 247–250 (DEAD). Residues 314–484 (GLEQGYVVCD…NVQSQLTKLI (171 aa)) form the Helicase C-terminal domain.

It belongs to the DEAD box helicase family. DDX18/HAS1 subfamily. As to quaternary structure, associates in the nucleolus with the 60S and pre-60S ribosomal subunits.

Its subcellular location is the nucleus. The protein localises to the nucleolus. It catalyses the reaction ATP + H2O = ADP + phosphate + H(+). Its function is as follows. ATP-dependent RNA helicase involved in 40S ribosomal subunit biogenesis. Required for the processing and cleavage of 35S pre-rRNA at sites A0, A1, and A2, leading to mature 18S rRNA. The polypeptide is ATP-dependent RNA helicase HAS1 (HAS1) (Lodderomyces elongisporus (strain ATCC 11503 / CBS 2605 / JCM 1781 / NBRC 1676 / NRRL YB-4239) (Yeast)).